A 158-amino-acid polypeptide reads, in one-letter code: NADH-quinone oxidoreductase subunit B (158 aa).

Residues cysteine 37, cysteine 38, cysteine 102, and cysteine 132 each coordinate [4Fe-4S] cluster.

The protein belongs to the complex I 20 kDa subunit family. As to quaternary structure, NDH-1 is composed of 14 different subunits. Subunits NuoB, C, D, E, F, and G constitute the peripheral sector of the complex. [4Fe-4S] cluster serves as cofactor.

It localises to the cell inner membrane. The catalysed reaction is a quinone + NADH + 5 H(+)(in) = a quinol + NAD(+) + 4 H(+)(out). NDH-1 shuttles electrons from NADH, via FMN and iron-sulfur (Fe-S) centers, to quinones in the respiratory chain. Couples the redox reaction to proton translocation (for every two electrons transferred, four hydrogen ions are translocated across the cytoplasmic membrane), and thus conserves the redox energy in a proton gradient. The chain is NADH-quinone oxidoreductase subunit B from Leptothrix cholodnii (strain ATCC 51168 / LMG 8142 / SP-6) (Leptothrix discophora (strain SP-6)).